A 1043-amino-acid polypeptide reads, in one-letter code: tRNA wybutosine-synthesizing protein 2/3/4 (1043 aa).

Residues 1 to 233 (MEFDRRKAAA…PVLQNGAKHG (233 aa)) form a tRNA wybutosine-synthesizing protein 3 homolog region. The interval 53 to 75 (RVSVLAQPPPPQQADPGGAKTKK) is disordered. Kelch repeat units follow at residues 360-410 (DIYV…AVDR), 412-460 (VYVF…SYGS), 461-510 (KLFL…IYKD), and 512-559 (LGIL…VIID). Positions 700 to 1041 (QPDDSCVFEE…RHLVVDVKCR (342 aa)) are tRNA wybutosine-synthesizing protein 2 homolog. S-adenosyl-L-methionine contacts are provided by residues Lys874 and 942–943 (DN).

This sequence in the C-terminal section; belongs to the class I-like SAM-binding methyltransferase superfamily. TRM5/TYW2 family. It in the N-terminal section; belongs to the TYW3 family.

The enzyme catalyses 4-demethyl-7-[(3S)-3-amino-3-carboxypropyl]wyosine(37) in tRNA(Phe) + S-adenosyl-L-methionine = 7-[(3S)-3-amino-3-carboxypropyl]wyosine(37) in tRNA(Phe) + S-adenosyl-L-homocysteine + H(+). The catalysed reaction is 4-demethylwyosine(37) in tRNA(Phe) + S-adenosyl-L-methionine = 4-demethyl-7-[(3S)-3-amino-3-carboxypropyl]wyosine(37) in tRNA(Phe) + S-methyl-5'-thioadenosine + H(+). The protein operates within tRNA modification; wybutosine-tRNA(Phe) biosynthesis. S-adenosyl-L-methionine-dependent transferase that acts as a component of the wybutosine biosynthesis pathway. Wybutosine is a hyper modified guanosine with a tricyclic base found at the 3'-position adjacent to the anticodon of eukaryotic phenylalanine tRNA. The protein is tRNA wybutosine-synthesizing protein 2/3/4 of Oryza sativa subsp. japonica (Rice).